Here is a 354-residue protein sequence, read N- to C-terminus: Caffeate O-methyltransferase-like protein 2 (354 aa).

S-adenosyl-L-homocysteine is bound by residues Gly198, Asp221, Met242, and Lys255. The active-site Proton acceptor is His259. Residues Glu287 and Glu319 contribute to the active site.

This sequence belongs to the class I-like SAM-binding methyltransferase superfamily. Cation-independent O-methyltransferase family. COMT subfamily.

The chain is Caffeate O-methyltransferase-like protein 2 from Oryza sativa subsp. japonica (Rice).